We begin with the raw amino-acid sequence, 378 residues long: D-alanine--D-alanine ligase (378 aa).

The ATP-grasp domain maps to 149 to 374 (KVLLAAAGIP…YTDLITKLIE (226 aa)). An ATP-binding site is contributed by 189–247 (EAGLQYPLFVKPSRAGSSFGVTKVEHEGDAAELAAAVYEASRHDWRILVEQGIDAREIE). Residues D328, E341, and N343 each coordinate Mg(2+).

Belongs to the D-alanine--D-alanine ligase family. It depends on Mg(2+) as a cofactor. Requires Mn(2+) as cofactor.

The protein resides in the cytoplasm. It catalyses the reaction 2 D-alanine + ATP = D-alanyl-D-alanine + ADP + phosphate + H(+). It participates in cell wall biogenesis; peptidoglycan biosynthesis. In terms of biological role, cell wall formation. The polypeptide is D-alanine--D-alanine ligase (Bifidobacterium adolescentis (strain ATCC 15703 / DSM 20083 / NCTC 11814 / E194a)).